We begin with the raw amino-acid sequence, 296 residues long: Nucleotide-binding protein SZO_12220 (296 aa).

An ATP-binding site is contributed by 13–20 (GMSGAGKT). Residue 63-66 (DMRS) coordinates GTP.

Belongs to the RapZ-like family.

Displays ATPase and GTPase activities. The protein is Nucleotide-binding protein SZO_12220 of Streptococcus equi subsp. zooepidemicus (strain H70).